Consider the following 434-residue polypeptide: MSNFSPREIVSELDRFIIGQNDAKRAVAIALRNRWRRQQLEGQMREEVMPKNILMIGPTGVGKTEISRRLAKLAGAPFVKVEATKFTEVGYVGRDVEQIVRDLVEVAITLVREKRRDDVKAKAHLNAEERVLDALVGKTASPATRDSFRKKLRNGEMDDKEIEIEVADTGSGPSFEIPGMPGANIGVMNLSDMLGKAMGGRTKTRKTTVKDSYPILINDESDKLLDQDQIVQEALRVTEDEGIVFIDEIDKIASREGGMGAGVSREGVQRDLLPLVEGTTVATKYGPVKTDHVLFIASGAFHVSKPSDLLPELQGRLPIRVELNALTREDFRRILTETEASLIKQYIALMETEEVKLEITDDAIDALADIAVDLNATVENIGARRLQTVMERVLDEISYTAPDKTGATFVIDAAYVKDKIGSLAKNTDLSRFIL.

Residues isoleucine 18, 60 to 65 (GVGKTE), aspartate 247, glutamate 312, and arginine 384 each bind ATP.

Belongs to the ClpX chaperone family. HslU subfamily. In terms of assembly, a double ring-shaped homohexamer of HslV is capped on each side by a ring-shaped HslU homohexamer. The assembly of the HslU/HslV complex is dependent on binding of ATP.

The protein localises to the cytoplasm. Functionally, ATPase subunit of a proteasome-like degradation complex; this subunit has chaperone activity. The binding of ATP and its subsequent hydrolysis by HslU are essential for unfolding of protein substrates subsequently hydrolyzed by HslV. HslU recognizes the N-terminal part of its protein substrates and unfolds these before they are guided to HslV for hydrolysis. The sequence is that of ATP-dependent protease ATPase subunit HslU from Brucella anthropi (strain ATCC 49188 / DSM 6882 / CCUG 24695 / JCM 21032 / LMG 3331 / NBRC 15819 / NCTC 12168 / Alc 37) (Ochrobactrum anthropi).